A 131-amino-acid polypeptide reads, in one-letter code: Profilin-4 (131 aa).

A disulfide bridge connects residues Cys-13 and Cys-115. An Involved in PIP2 interaction motif is present at residues 81-97 (AVIRGKKGAGGITVKKT). Thr-111 is subject to Phosphothreonine.

This sequence belongs to the profilin family. Occurs in many kinds of cells as a complex with monomeric actin in a 1:1 ratio. Phosphorylated by MAP kinases.

It localises to the cytoplasm. The protein localises to the cytoskeleton. In terms of biological role, binds to actin and affects the structure of the cytoskeleton. At high concentrations, profilin prevents the polymerization of actin, whereas it enhances it at low concentrations. This is Profilin-4 from Olea europaea (Common olive).